A 599-amino-acid chain; its full sequence is Elongation factor 4 (599 aa).

One can recognise a tr-type G domain in the interval 4–186 (SKIRNFSIIA…SIVEKVPAPK (183 aa)). GTP-binding positions include 16–21 (DHGKST) and 133–136 (NKVD).

The protein belongs to the TRAFAC class translation factor GTPase superfamily. Classic translation factor GTPase family. LepA subfamily.

Its subcellular location is the cell inner membrane. The catalysed reaction is GTP + H2O = GDP + phosphate + H(+). In terms of biological role, required for accurate and efficient protein synthesis under certain stress conditions. May act as a fidelity factor of the translation reaction, by catalyzing a one-codon backward translocation of tRNAs on improperly translocated ribosomes. Back-translocation proceeds from a post-translocation (POST) complex to a pre-translocation (PRE) complex, thus giving elongation factor G a second chance to translocate the tRNAs correctly. Binds to ribosomes in a GTP-dependent manner. This chain is Elongation factor 4, found in Syntrophotalea carbinolica (strain DSM 2380 / NBRC 103641 / GraBd1) (Pelobacter carbinolicus).